A 225-amino-acid chain; its full sequence is Histone H1.11L (225 aa).

Low complexity-rich tracts occupy residues 1-23 (MSET…PAKA) and 31-43 (AAGG…PAGP). Disordered regions lie at residues 1-46 (MSET…PSVT) and 94-225 (SKGT…AKKK). At Ser2 the chain carries N-acetylserine. Positions 41-114 (AGPSVTELIT…GASGSFRLSK (74 aa)) constitute an H15 domain. Basic residues-rich tracts occupy residues 123-138 (APKK…KPAA), 146-163 (KKPK…KAKK), 171-189 (KSAK…KKAV), and 198-225 (KAVK…AKKK).

The protein belongs to the histone H1/H5 family.

Its subcellular location is the nucleus. It localises to the chromosome. Histones H1 are necessary for the condensation of nucleosome chains into higher-order structures. This chain is Histone H1.11L, found in Gallus gallus (Chicken).